The sequence spans 493 residues: Cobyric acid synthase (493 aa).

The 195-residue stretch at 246–440 (PIDIAVIKMP…IHGVFDGVVF (195 aa)) folds into the GATase cobBQ-type domain. C326 serves as the catalytic Nucleophile. Residue H432 is part of the active site.

It belongs to the CobB/CobQ family. CobQ subfamily.

Its pathway is cofactor biosynthesis; adenosylcobalamin biosynthesis. Its function is as follows. Catalyzes amidations at positions B, D, E, and G on adenosylcobyrinic A,C-diamide. NH(2) groups are provided by glutamine, and one molecule of ATP is hydrogenolyzed for each amidation. This Clostridium botulinum (strain ATCC 19397 / Type A) protein is Cobyric acid synthase.